Here is a 203-residue protein sequence, read N- to C-terminus: A-type ATP synthase subunit E (203 aa).

Belongs to the V-ATPase E subunit family. Has multiple subunits with at least A(3), B(3), C, D, E, F, H, I and proteolipid K(x).

It is found in the cell membrane. Functionally, component of the A-type ATP synthase that produces ATP from ADP in the presence of a proton gradient across the membrane. In Methanococcus maripaludis (strain C6 / ATCC BAA-1332), this protein is A-type ATP synthase subunit E.